Consider the following 341-residue polypeptide: DNA-directed RNA polymerase subunit alpha (341 aa).

The tract at residues 1 to 237 (MLSLSKNWNA…EQLQLFISFE (237 aa)) is alpha N-terminal domain (alpha-NTD). Residues 247–341 (TDALPFSPYL…LSKRYEDSYN (95 aa)) form an alpha C-terminal domain (alpha-CTD) region.

The protein belongs to the RNA polymerase alpha chain family. In terms of assembly, homodimer. The RNAP catalytic core consists of 2 alpha, 1 beta, 1 beta' and 1 omega subunit. When a sigma factor is associated with the core the holoenzyme is formed, which can initiate transcription.

The catalysed reaction is RNA(n) + a ribonucleoside 5'-triphosphate = RNA(n+1) + diphosphate. DNA-dependent RNA polymerase catalyzes the transcription of DNA into RNA using the four ribonucleoside triphosphates as substrates. This is DNA-directed RNA polymerase subunit alpha from Rickettsia bellii (strain RML369-C).